Reading from the N-terminus, the 209-residue chain is Elongation factor Ts, chloroplastic (209 aa).

Belongs to the EF-Ts family.

Its subcellular location is the plastid. It localises to the chloroplast. Associates with the EF-Tu.GDP complex and induces the exchange of GDP to GTP. It remains bound to the aminoacyl-tRNA.EF-Tu.GTP complex up to the GTP hydrolysis stage on the ribosome. This chain is Elongation factor Ts, chloroplastic (tsf), found in Cyanidioschyzon merolae (strain NIES-3377 / 10D) (Unicellular red alga).